Consider the following 201-residue polypeptide: Urease accessory protein UreG (201 aa).

A GTP-binding site is contributed by 12-19; that stretch reads GPVGSGKT.

This sequence belongs to the SIMIBI class G3E GTPase family. UreG subfamily. As to quaternary structure, homodimer. UreD, UreF and UreG form a complex that acts as a GTP-hydrolysis-dependent molecular chaperone, activating the urease apoprotein by helping to assemble the nickel containing metallocenter of UreC. The UreE protein probably delivers the nickel.

Its subcellular location is the cytoplasm. In terms of biological role, facilitates the functional incorporation of the urease nickel metallocenter. This process requires GTP hydrolysis, probably effectuated by UreG. In Dechloromonas aromatica (strain RCB), this protein is Urease accessory protein UreG.